The chain runs to 268 residues: Imidazole glycerol phosphate synthase subunit HisF (268 aa).

Catalysis depends on residues aspartate 12 and aspartate 131.

This sequence belongs to the HisA/HisF family. In terms of assembly, heterodimer of HisH and HisF.

Its subcellular location is the cytoplasm. The catalysed reaction is 5-[(5-phospho-1-deoxy-D-ribulos-1-ylimino)methylamino]-1-(5-phospho-beta-D-ribosyl)imidazole-4-carboxamide + L-glutamine = D-erythro-1-(imidazol-4-yl)glycerol 3-phosphate + 5-amino-1-(5-phospho-beta-D-ribosyl)imidazole-4-carboxamide + L-glutamate + H(+). The protein operates within amino-acid biosynthesis; L-histidine biosynthesis; L-histidine from 5-phospho-alpha-D-ribose 1-diphosphate: step 5/9. In terms of biological role, IGPS catalyzes the conversion of PRFAR and glutamine to IGP, AICAR and glutamate. The HisF subunit catalyzes the cyclization activity that produces IGP and AICAR from PRFAR using the ammonia provided by the HisH subunit. This Methanosphaerula palustris (strain ATCC BAA-1556 / DSM 19958 / E1-9c) protein is Imidazole glycerol phosphate synthase subunit HisF.